The chain runs to 524 residues: Chromosomal replication initiator protein DnaA (524 aa).

The domain I, interacts with DnaA modulators stretch occupies residues 1 to 72; the sequence is MNDFWQHCSA…DLARDFWNAP (72 aa). The tract at residues 72–187 is domain II; it reads PIEVQFVLDP…GEADSMYERS (116 aa). The tract at residues 188 to 404 is domain III, AAA+ region; sequence KLNPVLTFDN…GALRKILAYS (217 aa). ATP contacts are provided by glycine 232, glycine 234, lysine 235, and threonine 236. A domain IV, binds dsDNA region spans residues 405 to 524; sequence KFHGREISIE…LHVLEQTLKG (120 aa).

Belongs to the DnaA family. In terms of assembly, oligomerizes as a right-handed, spiral filament on DNA at oriC.

It is found in the cytoplasm. Functionally, plays an essential role in the initiation and regulation of chromosomal replication. ATP-DnaA binds to the origin of replication (oriC) to initiate formation of the DNA replication initiation complex once per cell cycle. Binds the DnaA box (a 9 base pair repeat at the origin) and separates the double-stranded (ds)DNA. Forms a right-handed helical filament on oriC DNA; dsDNA binds to the exterior of the filament while single-stranded (ss)DNA is stabiized in the filament's interior. The ATP-DnaA-oriC complex binds and stabilizes one strand of the AT-rich DNA unwinding element (DUE), permitting loading of DNA polymerase. After initiation quickly degrades to an ADP-DnaA complex that is not apt for DNA replication. Binds acidic phospholipids. This is Chromosomal replication initiator protein DnaA from Burkholderia multivorans (strain ATCC 17616 / 249).